Consider the following 600-residue polypeptide: ATP-dependent lipid A-core flippase (600 aa).

4 helical membrane-spanning segments follow: residues 26 to 46, 82 to 102, 167 to 187, and 266 to 286; these read VGIF…QPML, LLIV…NYFL, VFLF…MLAI, and PMLQ…VLFL. The ABC transmembrane type-1 domain occupies 30 to 321; that stretch reads LLSIIGFVIF…LSEVSSTIQK (292 aa). The 237-residue stretch at 353-589 folds into the ABC transporter domain; it reads LEVKNLSFFY…NGYYARLHAM (237 aa). 387–394 is a binding site for ATP; that stretch reads GRSGSGKS.

It belongs to the ABC transporter superfamily. Lipid exporter (TC 3.A.1.106) family. Homodimer.

Its subcellular location is the cell inner membrane. The catalysed reaction is ATP + H2O + lipid A-core oligosaccharideSide 1 = ADP + phosphate + lipid A-core oligosaccharideSide 2.. Functionally, involved in lipopolysaccharide (LPS) biosynthesis. Translocates lipid A-core from the inner to the outer leaflet of the inner membrane. Transmembrane domains (TMD) form a pore in the inner membrane and the ATP-binding domain (NBD) is responsible for energy generation. The protein is ATP-dependent lipid A-core flippase of Pseudomonas savastanoi pv. phaseolicola (strain 1448A / Race 6) (Pseudomonas syringae pv. phaseolicola (strain 1448A / Race 6)).